A 94-amino-acid polypeptide reads, in one-letter code: Serine protease inhibitor Kazal-type 13 (94 aa).

Residues methionine 1–serine 23 form the signal peptide. The Kazal-like domain occupies arginine 33–aspartate 94. Disulfide bonds link cysteine 39-cysteine 75, cysteine 53-cysteine 72, and cysteine 61-cysteine 93. A glycan (N-linked (GlcNAc...) asparagine) is linked at asparagine 55.

The protein resides in the secreted. Its function is as follows. May be a serine protease inhibitor. Essential for sperm maturation and fertility. Inhibits sperm acrosome reaction, protecting sperm from premature reaction. This Homo sapiens (Human) protein is Serine protease inhibitor Kazal-type 13 (SPINK13).